The following is a 278-amino-acid chain: Large ribosomal subunit protein uL2c (278 aa).

Positions 222 to 241 (GVVMNPNDHPHGGGEGRSPI) are disordered.

The protein belongs to the universal ribosomal protein uL2 family. As to quaternary structure, part of the 50S ribosomal subunit.

The protein resides in the plastid. It is found in the chloroplast. The protein is Large ribosomal subunit protein uL2c (rpl2) of Tupiella akineta (Green alga).